We begin with the raw amino-acid sequence, 128 residues long: Calcitonin gene-related peptide 1 (128 aa).

The signal sequence occupies residues 1 to 25 (MGFQKFSPFLALSILVLLQAGSLHA). Residues 26-80 (APFRSALESSPADPATLSEDEARLLLAALVQDYVQMKASELEQEQEREGSRIIAQ) constitute a propeptide that is removed on maturation. A disulfide bridge connects residues Cys84 and Cys89. Residue Phe119 is modified to Phenylalanine amide. The propeptide occupies 125 to 128 (DLQA).

This sequence belongs to the calcitonin family. As to expression, expressed in spinal cord.

It localises to the secreted. CGRP1/CALCA is a peptide hormone that induces vasodilation mediated by the CALCRL-RAMP1 receptor complex. Dilates a variety of vessels including the coronary, cerebral and systemic vasculature. Its abundance in the CNS also points toward a neurotransmitter or neuromodulator role. It also elevates platelet cAMP. CGRP1 can also bind and activate CALCR-RAMP1 (AMYR1) receptor complex. The polypeptide is Calcitonin gene-related peptide 1 (Homo sapiens (Human)).